A 160-amino-acid polypeptide reads, in one-letter code: Protein-export protein SecB (160 aa).

This sequence belongs to the SecB family. As to quaternary structure, homotetramer, a dimer of dimers. One homotetramer interacts with 1 SecA dimer.

Its subcellular location is the cytoplasm. One of the proteins required for the normal export of preproteins out of the cell cytoplasm. It is a molecular chaperone that binds to a subset of precursor proteins, maintaining them in a translocation-competent state. It also specifically binds to its receptor SecA. The sequence is that of Protein-export protein SecB from Rhizobium johnstonii (strain DSM 114642 / LMG 32736 / 3841) (Rhizobium leguminosarum bv. viciae).